A 188-amino-acid polypeptide reads, in one-letter code: Peptide deformylase (188 aa).

Residues Cys107 and His149 each contribute to the Fe cation site. Glu150 is a catalytic residue. His153 serves as a coordination point for Fe cation.

It belongs to the polypeptide deformylase family. Fe(2+) is required as a cofactor.

It carries out the reaction N-terminal N-formyl-L-methionyl-[peptide] + H2O = N-terminal L-methionyl-[peptide] + formate. Removes the formyl group from the N-terminal Met of newly synthesized proteins. Requires at least a dipeptide for an efficient rate of reaction. N-terminal L-methionine is a prerequisite for activity but the enzyme has broad specificity at other positions. The sequence is that of Peptide deformylase from Thermosynechococcus vestitus (strain NIES-2133 / IAM M-273 / BP-1).